Here is a 105-residue protein sequence, read N- to C-terminus: Large ribosomal subunit protein uL24 (105 aa).

It belongs to the universal ribosomal protein uL24 family. In terms of assembly, part of the 50S ribosomal subunit.

One of two assembly initiator proteins, it binds directly to the 5'-end of the 23S rRNA, where it nucleates assembly of the 50S subunit. Functionally, one of the proteins that surrounds the polypeptide exit tunnel on the outside of the subunit. The polypeptide is Large ribosomal subunit protein uL24 (Buchnera aphidicola subsp. Cinara cedri (strain Cc)).